We begin with the raw amino-acid sequence, 243 residues long: Pyridoxine 5'-phosphate synthase (243 aa).

Residue Asn9 coordinates 3-amino-2-oxopropyl phosphate. 11–12 (DH) contributes to the 1-deoxy-D-xylulose 5-phosphate binding site. A 3-amino-2-oxopropyl phosphate-binding site is contributed by Arg20. His45 functions as the Proton acceptor in the catalytic mechanism. Residues Arg47 and His52 each contribute to the 1-deoxy-D-xylulose 5-phosphate site. Glu72 serves as the catalytic Proton acceptor. Thr102 lines the 1-deoxy-D-xylulose 5-phosphate pocket. Catalysis depends on His193, which acts as the Proton donor. Residues Gly194 and 215–216 (GH) contribute to the 3-amino-2-oxopropyl phosphate site.

It belongs to the PNP synthase family. In terms of assembly, homooctamer; tetramer of dimers.

It localises to the cytoplasm. It catalyses the reaction 3-amino-2-oxopropyl phosphate + 1-deoxy-D-xylulose 5-phosphate = pyridoxine 5'-phosphate + phosphate + 2 H2O + H(+). It participates in cofactor biosynthesis; pyridoxine 5'-phosphate biosynthesis; pyridoxine 5'-phosphate from D-erythrose 4-phosphate: step 5/5. In terms of biological role, catalyzes the complicated ring closure reaction between the two acyclic compounds 1-deoxy-D-xylulose-5-phosphate (DXP) and 3-amino-2-oxopropyl phosphate (1-amino-acetone-3-phosphate or AAP) to form pyridoxine 5'-phosphate (PNP) and inorganic phosphate. The sequence is that of Pyridoxine 5'-phosphate synthase from Yersinia pseudotuberculosis serotype I (strain IP32953).